A 473-amino-acid chain; its full sequence is Mitochondrial distribution and morphology protein 10 (473 aa).

The protein belongs to the MDM10 family. In terms of assembly, component of the ER-mitochondria encounter structure (ERMES) or MDM complex, composed of MMM1, MDM10, MDM12 and MDM34. Associates with the mitochondrial outer membrane sorting assembly machinery SAM(core) complex.

The protein localises to the mitochondrion outer membrane. Functionally, component of the ERMES/MDM complex, which serves as a molecular tether to connect the endoplasmic reticulum and mitochondria. Components of this complex are involved in the control of mitochondrial shape and protein biogenesis and may function in phospholipid exchange. MDM10 is involved in the late assembly steps of the general translocase of the mitochondrial outer membrane (TOM complex). Functions in the TOM40-specific route of the assembly of outer membrane beta-barrel proteins, including the association of TOM40 with the receptor TOM22 and small TOM proteins. Can associate with the SAM(core) complex as well as the MDM12-MMM1 complex, both involved in late steps of the major beta-barrel assembly pathway, that is responsible for biogenesis of all outer membrane beta-barrel proteins. May act as a switch that shuttles between both complexes and channels precursor proteins into the TOM40-specific pathway. Plays a role in mitochondrial morphology and in the inheritance of mitochondria. The polypeptide is Mitochondrial distribution and morphology protein 10 (Candida albicans (strain SC5314 / ATCC MYA-2876) (Yeast)).